The chain runs to 582 residues: Formate--tetrahydrofolate ligase (582 aa).

Residue 65–72 (TPLGEGKT) coordinates ATP.

Belongs to the formate--tetrahydrofolate ligase family.

The enzyme catalyses (6S)-5,6,7,8-tetrahydrofolate + formate + ATP = (6R)-10-formyltetrahydrofolate + ADP + phosphate. It participates in one-carbon metabolism; tetrahydrofolate interconversion. The chain is Formate--tetrahydrofolate ligase from Vibrio atlanticus (strain LGP32) (Vibrio splendidus (strain Mel32)).